The chain runs to 274 residues: Penicillin-insensitive murein endopeptidase (274 aa).

The signal sequence occupies residues 1–19 (MNKTAIALLALLASSASLA). Disulfide bonds link cysteine 44–cysteine 265, cysteine 187–cysteine 235, and cysteine 216–cysteine 223. 6 residues coordinate Zn(2+): histidine 110, histidine 113, aspartate 120, aspartate 147, histidine 150, and histidine 211. A disordered region spans residues 227–274 (PLPPPGDGCGAELQSWFEPPKPGTTKPEKKTPPPLPPSCQALLDEHVI).

Belongs to the peptidase M74 family. Dimer. Zn(2+) serves as cofactor.

It localises to the periplasm. Functionally, murein endopeptidase that cleaves the D-alanyl-meso-2,6-diamino-pimelyl amide bond that connects peptidoglycan strands. Likely plays a role in the removal of murein from the sacculus. This chain is Penicillin-insensitive murein endopeptidase, found in Escherichia coli O1:K1 / APEC.